Here is a 920-residue protein sequence, read N- to C-terminus: Isoleucine--tRNA ligase (920 aa).

The short motif at 57–67 is the 'HIGH' region element; sequence PYANGDIHLGH. L-isoleucyl-5'-AMP is bound at residue E560. Positions 601–605 match the 'KMSKS' region motif; sequence KMSKS. K604 serves as a coordination point for ATP. Residues C890, C893, C910, and C913 each coordinate Zn(2+).

It belongs to the class-I aminoacyl-tRNA synthetase family. IleS type 1 subfamily. Monomer. Zn(2+) is required as a cofactor.

Its subcellular location is the cytoplasm. It carries out the reaction tRNA(Ile) + L-isoleucine + ATP = L-isoleucyl-tRNA(Ile) + AMP + diphosphate. Functionally, catalyzes the attachment of isoleucine to tRNA(Ile). As IleRS can inadvertently accommodate and process structurally similar amino acids such as valine, to avoid such errors it has two additional distinct tRNA(Ile)-dependent editing activities. One activity is designated as 'pretransfer' editing and involves the hydrolysis of activated Val-AMP. The other activity is designated 'posttransfer' editing and involves deacylation of mischarged Val-tRNA(Ile). In Caldicellulosiruptor saccharolyticus (strain ATCC 43494 / DSM 8903 / Tp8T 6331), this protein is Isoleucine--tRNA ligase.